Here is a 403-residue protein sequence, read N- to C-terminus: Ribosomal RNA large subunit methyltransferase I (403 aa).

The 80-residue stretch at tyrosine 9–arginine 88 folds into the PUA domain.

It belongs to the methyltransferase superfamily. RlmI family.

The protein localises to the cytoplasm. It catalyses the reaction cytidine(1962) in 23S rRNA + S-adenosyl-L-methionine = 5-methylcytidine(1962) in 23S rRNA + S-adenosyl-L-homocysteine + H(+). Functionally, specifically methylates the cytosine at position 1962 (m5C1962) of 23S rRNA. This chain is Ribosomal RNA large subunit methyltransferase I, found in Salmonella arizonae (strain ATCC BAA-731 / CDC346-86 / RSK2980).